Here is a 198-residue protein sequence, read N- to C-terminus: Ribosome maturation factor RimM (198 aa).

A PRC barrel domain is found at D92–E168. Residues A163–S172 are compositionally biased toward acidic residues. The interval A163 to P198 is disordered.

The protein belongs to the RimM family. As to quaternary structure, binds ribosomal protein uS19.

Its subcellular location is the cytoplasm. An accessory protein needed during the final step in the assembly of 30S ribosomal subunit, possibly for assembly of the head region. Essential for efficient processing of 16S rRNA. May be needed both before and after RbfA during the maturation of 16S rRNA. It has affinity for free ribosomal 30S subunits but not for 70S ribosomes. This is Ribosome maturation factor RimM from Bradyrhizobium sp. (strain BTAi1 / ATCC BAA-1182).